A 431-amino-acid polypeptide reads, in one-letter code: MLDIQLLRSNTAAVAERLARRGYDFDTARFDALEERRKSVQVKTEELQASRNSISKQIGALKGQGKHEEAQVAMDQVAQIKTDLEQAAADLDAVQKELDAWLLSIPNLPHEDVPFGKDETENVEVRKVGTPREFDFEIKDHVDLGEPLGLDFEGGAKLSGARFTVMRGQIARLHRALAQFMLDTHTLKHGYTEHYTPYIVDDTTLQGTGQLPKFAEDLFHVTRGGDESKTTQYLIPTAEVTLTNTVAGSIIPSEQLPLKLTAHSPCFRSEAGSYGKDTRGLIRQHQFDKVEMVQIVHPEKSYETLEEMVGHAENILKALELPYRVITLCTGDMGFGATKTYDLEVWVPAQNTYREISSCSNCEDFQARRMKARFKDENGKNRLVHTLNGSGLAVGRTLVAVLENHQNADGSINIPAALQPYMGGVAKLEVK.

L-serine is bound at residue 237-239 (TAE). 268–270 (RSE) serves as a coordination point for ATP. An L-serine-binding site is contributed by Glu-291. 355 to 358 (EISS) contributes to the ATP binding site. Position 390 (Ser-390) interacts with L-serine.

It belongs to the class-II aminoacyl-tRNA synthetase family. Type-1 seryl-tRNA synthetase subfamily. In terms of assembly, homodimer. The tRNA molecule binds across the dimer.

It localises to the cytoplasm. The catalysed reaction is tRNA(Ser) + L-serine + ATP = L-seryl-tRNA(Ser) + AMP + diphosphate + H(+). It catalyses the reaction tRNA(Sec) + L-serine + ATP = L-seryl-tRNA(Sec) + AMP + diphosphate + H(+). Its pathway is aminoacyl-tRNA biosynthesis; selenocysteinyl-tRNA(Sec) biosynthesis; L-seryl-tRNA(Sec) from L-serine and tRNA(Sec): step 1/1. In terms of biological role, catalyzes the attachment of serine to tRNA(Ser). Is also able to aminoacylate tRNA(Sec) with serine, to form the misacylated tRNA L-seryl-tRNA(Sec), which will be further converted into selenocysteinyl-tRNA(Sec). The sequence is that of Serine--tRNA ligase from Neisseria meningitidis serogroup A / serotype 4A (strain DSM 15465 / Z2491).